Here is a 276-residue protein sequence, read N- to C-terminus: Diaminopimelate epimerase (276 aa).

The substrate site is built by Asn13, Gln46, and Asn66. Cys75 functions as the Proton donor in the catalytic mechanism. Residues 76-77, Asn159, Asn192, and 210-211 each bind substrate; these read GN and ER. The Proton acceptor role is filled by Cys219. 220-221 contributes to the substrate binding site; that stretch reads GS.

Belongs to the diaminopimelate epimerase family. As to quaternary structure, homodimer.

The protein resides in the cytoplasm. The enzyme catalyses (2S,6S)-2,6-diaminopimelate = meso-2,6-diaminopimelate. It participates in amino-acid biosynthesis; L-lysine biosynthesis via DAP pathway; DL-2,6-diaminopimelate from LL-2,6-diaminopimelate: step 1/1. In terms of biological role, catalyzes the stereoinversion of LL-2,6-diaminopimelate (L,L-DAP) to meso-diaminopimelate (meso-DAP), a precursor of L-lysine and an essential component of the bacterial peptidoglycan. This is Diaminopimelate epimerase from Vibrio parahaemolyticus serotype O3:K6 (strain RIMD 2210633).